Reading from the N-terminus, the 303-residue chain is Acetylglutamate kinase (303 aa).

Substrate-binding positions include 68–69 (GG), Arg-90, and Asn-194.

It belongs to the acetylglutamate kinase family. ArgB subfamily.

It is found in the cytoplasm. It carries out the reaction N-acetyl-L-glutamate + ATP = N-acetyl-L-glutamyl 5-phosphate + ADP. It participates in amino-acid biosynthesis; L-arginine biosynthesis; N(2)-acetyl-L-ornithine from L-glutamate: step 2/4. Catalyzes the ATP-dependent phosphorylation of N-acetyl-L-glutamate. The polypeptide is Acetylglutamate kinase (Psychrobacter arcticus (strain DSM 17307 / VKM B-2377 / 273-4)).